A 320-amino-acid polypeptide reads, in one-letter code: Cytochrome f (320 aa).

The signal sequence occupies residues 1–35 (MQTRKTFSWIKEQITRSISASLMIYIITRTSISSA). Heme contacts are provided by Tyr-36, Cys-56, Cys-59, and His-60. A helical transmembrane segment spans residues 286 to 306 (VQGLLFFLASVILAQIFLVLK).

It belongs to the cytochrome f family. The 4 large subunits of the cytochrome b6-f complex are cytochrome b6, subunit IV (17 kDa polypeptide, petD), cytochrome f and the Rieske protein, while the 4 small subunits are PetG, PetL, PetM and PetN. The complex functions as a dimer. Heme serves as cofactor.

The protein localises to the plastid. It localises to the chloroplast thylakoid membrane. Functionally, component of the cytochrome b6-f complex, which mediates electron transfer between photosystem II (PSII) and photosystem I (PSI), cyclic electron flow around PSI, and state transitions. The chain is Cytochrome f from Panax ginseng (Korean ginseng).